Reading from the N-terminus, the 146-residue chain is Globin (146 aa).

At Ser-1 the chain carries N-acetylserine. The Globin domain occupies 1-146 (SLSGAEADLL…IIDALKKAGK (146 aa)). Residue His-95 coordinates heme b.

This sequence belongs to the globin family. In terms of assembly, monomer.

The sequence is that of Globin from Bursatella leachii (Ragged sea hare).